Reading from the N-terminus, the 432-residue chain is MYYCISFTYKNTDIALREKLSFSNETKKSEFLKIISTHENIEECLVISTCNRVEIVAFVKMACAEFIVKSLALLCDVDKDILLEKADIFEDSGAIHHLFSVASSLDSLVVGETQIAGQLKDAFAFAVKNSFCGVHLSRAVHSAFKCATKVRNETQISKKPISVASVAVAKAKELADLTQKKAVVIGAGEMGELAAKHLIAAGAKVIILNRDLQKAKDLCERLGVLSEYDSLENLKKYLNQYEFFFSATNAPNAIITNSLIEELPYKRYFFDIAVPRDIDINENENISVFAVDDLEIVVQKNLALREQEARMAYGIIGRETSEFFRYLNDLALMPIIKAIRLQAKEYADKQLEIALKKGYLKKSDKEEARKLIHQVFKAFLHMPTVNLKHLQGKMQSDTVINAMRYVFDLKNNLEGLNQYKCEFDMENNDEIY.

Residues 49 to 52 (TCNR), serine 107, 112 to 114 (ETQ), and glutamine 118 each bind substrate. The active-site Nucleophile is the cysteine 50. NADP(+) is bound at residue 186–191 (GAGEMG).

It belongs to the glutamyl-tRNA reductase family. In terms of assembly, homodimer.

The enzyme catalyses (S)-4-amino-5-oxopentanoate + tRNA(Glu) + NADP(+) = L-glutamyl-tRNA(Glu) + NADPH + H(+). The protein operates within porphyrin-containing compound metabolism; protoporphyrin-IX biosynthesis; 5-aminolevulinate from L-glutamyl-tRNA(Glu): step 1/2. Catalyzes the NADPH-dependent reduction of glutamyl-tRNA(Glu) to glutamate 1-semialdehyde (GSA). The chain is Glutamyl-tRNA reductase from Campylobacter jejuni subsp. doylei (strain ATCC BAA-1458 / RM4099 / 269.97).